The following is a 344-amino-acid chain: Arginine N-succinyltransferase (344 aa).

Residue Leu125 coordinates succinyl-CoA. The active-site Proton donor is the His229.

The protein belongs to the arginine N-succinyltransferase family.

The enzyme catalyses succinyl-CoA + L-arginine = N(2)-succinyl-L-arginine + CoA + H(+). It participates in amino-acid degradation; L-arginine degradation via AST pathway; L-glutamate and succinate from L-arginine: step 1/5. In terms of biological role, catalyzes the transfer of succinyl-CoA to arginine to produce N(2)-succinylarginine. This chain is Arginine N-succinyltransferase, found in Salmonella arizonae (strain ATCC BAA-731 / CDC346-86 / RSK2980).